A 331-amino-acid polypeptide reads, in one-letter code: ADP,ATP carrier protein 2, mitochondrial (331 aa).

Solcar repeat units follow at residues 29-122 (KNFA…FKRM), 134-226 (KWFG…LKPV), and 238-320 (ASFA…LQIL). Helical transmembrane passes span 31–58 (FAIDFLMGGVSAAVSKTAAAPIERVKLL), 99–123 (TANVIRYFPTQALNFAFKDYFKRMF), 132–152 (YWKWFGGNLASGGAAGASSLF), 202–223 (FNISCVGIIVYRGLYFGLYDSL), and 237–257 (FASFALGWLITNGAGLASYPI). Residues arginine 104 and lysine 116 each contribute to the ADP site. Residue arginine 261 participates in ADP binding. Residues 261–266 (RRRMMM) are important for transport activity. A Nucleotide carrier signature motif motif is present at residues 261–266 (RRRMMM). A helical membrane pass occupies residues 297–317 (AGANILRAIAGAGVLSGYDQL).

This sequence belongs to the mitochondrial carrier (TC 2.A.29) family. In terms of assembly, monomer.

Its subcellular location is the mitochondrion inner membrane. The catalysed reaction is ADP(in) + ATP(out) = ADP(out) + ATP(in). The matrix-open state (m-state) is inhibited by the membrane-permeable bongkrekic acid (BKA). The cytoplasmic-open state (c-state) is inhibited by the membrane-impermeable toxic inhibitor carboxyatractyloside (CATR). Its function is as follows. ADP:ATP antiporter that mediates import of ADP into the mitochondrial matrix for ATP synthesis, and export of ATP out to fuel the cell. Cycles between the cytoplasmic-open state (c-state) and the matrix-open state (m-state): operates by the alternating access mechanism with a single substrate-binding site intermittently exposed to either the cytosolic (c-state) or matrix (m-state) side of the inner mitochondrial membrane. This chain is ADP,ATP carrier protein 2, mitochondrial (ANT-G2), found in Triticum aestivum (Wheat).